A 104-amino-acid chain; its full sequence is SOSS complex subunit C (104 aa).

It belongs to the SOSS-C family. In terms of assembly, belongs to the multiprotein complex Integrator. Component of the SOSS complex, composed of SOSS-B (SOSS-B1/NABP2 or SOSS-B2/NABP1), SOSS-A/INTS3 and SOSS-C/INIP.

The protein resides in the nucleus. In terms of biological role, component of the SOSS complex, a multiprotein complex that functions downstream of the MRN complex to promote DNA repair and G2/M checkpoint. The SOSS complex associates with single-stranded DNA at DNA lesions and influences diverse endpoints in the cellular DNA damage response including cell-cycle checkpoint activation, recombinational repair and maintenance of genomic stability. Required for efficient homologous recombination-dependent repair of double-strand breaks (DSBs). The chain is SOSS complex subunit C (INIP) from Taeniopygia guttata (Zebra finch).